The primary structure comprises 1448 residues: Glutamate receptor ionotropic, NMDA 2B (1448 aa).

Positions M1–A24 are cleaved as a signal peptide. Topologically, residues Q25 to D554 are extracellular. C81 and C316 are oxidised to a cystine. Zn(2+)-binding residues include H122 and E279. The N-linked (GlcNAc...) asparagine glycan is linked to N336. 2 disulfide bridges follow: C426/C453 and C433/C454. L-glutamate is bound by residues T511 and R516. A helical membrane pass occupies residues V555–V573. Residues F574–G600 lie on the Cytoplasmic side of the membrane. Residues K601 to P620 constitute an intramembrane region (discontinuously helical). The segment at K601–P620 is pore-forming. Residues K621–I627 are Cytoplasmic-facing. A helical transmembrane segment spans residues M628–Y643. Topologically, residues T644 to F819 are extracellular. N-linked (GlcNAc...) asparagine glycosylation is present at N685. L-glutamate contacts are provided by residues S687–T688 and D729. A disulfide bridge connects residues C743 and C798. The helical transmembrane segment at Y820 to F839 threads the bilayer. Over F840 to V1448 the chain is Cytoplasmic. Polar residues predominate over residues A1254–G1265. A disordered region spans residues A1254–R1277. A compositionally biased stretch (basic residues) spans A1267–R1277.

The protein belongs to the glutamate-gated ion channel (TC 1.A.10.1) family. NR2B/GRIN2B subfamily. Heterotetramer. Forms heterotetrameric channels composed of two GluN1/zeta subunits (GRIN1), and two identical GluN2/epsilon subunits (GRIN2A, GRIN2B, GRIN2C or GRIN2D) or GluN3 subunits (GRIN3A or GRIN3B) (in vitro). In vivo, the subunit composition may depend on the expression levels of the different subunits. Detected in oocytes.

It is found in the cell membrane. It localises to the postsynaptic cell membrane. It catalyses the reaction Ca(2+)(in) = Ca(2+)(out). It carries out the reaction Na(+)(in) = Na(+)(out). The enzyme catalyses K(+)(in) = K(+)(out). In terms of biological role, component of N-methyl-D-aspartate (NMDA) receptors (NMDARs) that function as heterotetrameric, ligand-gated cation channels with high calcium permeability and voltage-dependent block by Mg(2+). Channel activation requires binding of the neurotransmitter L-glutamate to the GluN2 subunit, glycine binding to the GluN1 subunit, plus membrane depolarization to eliminate channel inhibition by Mg(2+). NMDARs mediate simultaneously the potasium efflux and the influx of calcium and sodium. Each GluN2 subunit confers differential attributes to channel properties, including activation, deactivation and desensitization kinetics, pH sensitivity, Ca2(+) permeability, and binding to allosteric modulators. This is Glutamate receptor ionotropic, NMDA 2B from Xenopus laevis (African clawed frog).